Consider the following 713-residue polypeptide: uncharacterized protein (713 aa).

The helical transmembrane segment at V686–F706 threads the bilayer.

The protein belongs to the plectrovirus ORF1 family.

It localises to the host membrane. This is an uncharacterized protein from Spiroplasma melliferum (SpV1).